The following is a 265-amino-acid chain: MSRIAQTFSQLSAQGRKGLIPFITAGDPYPELTVDLMHALVKGGANVIELGVPFSDPMADGPVIQRASERALAKKIGLRTVLDYVRAFRATDKTTPVVLMGYANPIERMGIDAFAKAASEAGVDGVLVVDYPPEECEAFAKTMRAAGIDPIFLLAPTSTEARMAQIARVASGYIYYVSLKGVTGAATLDLDSVAARIPQIRQHARLPVGVGFGIRDAATARAIGGVADAVVIGSRIVQLLEEASREQAVQCLTDFIADIRQALDA.

Catalysis depends on proton acceptor residues Glu-49 and Asp-60.

The protein belongs to the TrpA family. Tetramer of two alpha and two beta chains.

It catalyses the reaction (1S,2R)-1-C-(indol-3-yl)glycerol 3-phosphate + L-serine = D-glyceraldehyde 3-phosphate + L-tryptophan + H2O. Its pathway is amino-acid biosynthesis; L-tryptophan biosynthesis; L-tryptophan from chorismate: step 5/5. Its function is as follows. The alpha subunit is responsible for the aldol cleavage of indoleglycerol phosphate to indole and glyceraldehyde 3-phosphate. The protein is Tryptophan synthase alpha chain of Ralstonia nicotianae (strain ATCC BAA-1114 / GMI1000) (Ralstonia solanacearum).